Here is a 337-residue protein sequence, read N- to C-terminus: Secreted effector protein EspF(U) (337 aa).

Tandem repeats lie at residues 96-142 (IKPA…AEHG), 143-189 (IQPA…AEHG), 190-236 (IQPA…AEHG), 237-283 (IQPA…AEHG), and 284-330 (IQPA…AEHG). Residues 96-330 (IKPARSMAEH…RLMQHLAEHG (235 aa)) are 5 X 48 AA approximate tandem repeats. The segment at 291–312 (AEHIPPAPNWPAPTPPVQNEQS) is disordered. Residues 295 to 306 (PPAPNWPAPTPP) are compositionally biased toward pro residues.

It belongs to the EspF(U)/TccP family. As to quaternary structure, interacts with host BAIAP2 and host WASL/N-WASP. Can also interact with host proteins BAIAP2L1 and WAS/WASP.

The protein resides in the secreted. It localises to the host cytoplasm. In terms of biological role, required for efficient pedestal formation in host epithelial cells during infection. Acts as an intermediate between Tir (via host BAIAP2) and host WASL/N-WASP. Directly binds and activates WASL/N-WASP, which stimulates actin polymerization and leads to the formation of actin pedestals at the sites of bacterial adhesion. This chain is Secreted effector protein EspF(U) (espF(U)), found in Escherichia coli O157:H7.